Consider the following 472-residue polypeptide: PEP-dependent dihydroxyacetone kinase, phosphoryl donor subunit DhaM (472 aa).

In terms of domain architecture, PTS EIIA type-4 spans 1-135 (MVNLVIVSHS…HALEAKREQL (135 aa)). The active-site Tele-phosphohistidine intermediate is the His9. In terms of domain architecture, HPr spans 155–242 (ARSLAVVIKN…QLAEDNFGET (88 aa)). His169 (pros-phosphohistidine intermediate) is an active-site residue. Residues 264–472 (QPVLCTVQAK…VKTQRFNRQG (209 aa)) are PTS EI-like, N-terminal part. His430 acts as the Tele-phosphohistidine intermediate in catalysis.

This sequence belongs to the PEP-utilizing enzyme family. In terms of assembly, homodimer. The dihydroxyacetone kinase complex is composed of a homodimer of DhaM, a homodimer of DhaK and the subunit DhaL.

The enzyme catalyses dihydroxyacetone + phosphoenolpyruvate = dihydroxyacetone phosphate + pyruvate. The protein operates within polyol metabolism; glycerol degradation. Its function is as follows. Component of the dihydroxyacetone kinase complex, which is responsible for the phosphoenolpyruvate (PEP)-dependent phosphorylation of dihydroxyacetone. DhaM serves as the phosphoryl donor. Is phosphorylated by phosphoenolpyruvate in an EI- and HPr-dependent reaction, and a phosphorelay system on histidine residues finally leads to phosphoryl transfer to DhaL and dihydroxyacetone. This Escherichia coli (strain K12) protein is PEP-dependent dihydroxyacetone kinase, phosphoryl donor subunit DhaM.